The chain runs to 365 residues: Putrescine carbamoyltransferase (365 aa).

Carbamoyl phosphate-binding positions include 54-58 (STRTR), Arg105, and His132. 277–280 (HCLP) lines the putrescine pocket.

Belongs to the aspartate/ornithine carbamoyltransferase superfamily. PTCase family. Homotrimer.

Its subcellular location is the cytoplasm. The catalysed reaction is carbamoyl phosphate + putrescine = N-carbamoylputrescine + phosphate + H(+). It participates in amine and polyamine biosynthesis; putrescine biosynthesis via agmatine pathway; putrescine from N-carbamoylputrescine (transferase route): step 1/1. Its function is as follows. Catalyzes the phosphorolysis of N-carbamoylputrescine to form carbamoyl phosphate and putrescine. Is involved in the degradation pathway of the polyamine agmatine. The chain is Putrescine carbamoyltransferase from Mycoplasma mycoides subsp. mycoides SC (strain CCUG 32753 / NCTC 10114 / PG1).